The primary structure comprises 305 residues: tRNA pseudouridine synthase B (305 aa).

The active-site Nucleophile is the D48.

Belongs to the pseudouridine synthase TruB family. Type 1 subfamily.

It catalyses the reaction uridine(55) in tRNA = pseudouridine(55) in tRNA. Its function is as follows. Responsible for synthesis of pseudouridine from uracil-55 in the psi GC loop of transfer RNAs. The polypeptide is tRNA pseudouridine synthase B (Mannheimia succiniciproducens (strain KCTC 0769BP / MBEL55E)).